Consider the following 591-residue polypeptide: L-fucose isomerase (591 aa).

Active-site proton acceptor residues include E337 and D361. Residues E337, D361, and H528 each contribute to the Mn(2+) site.

It belongs to the L-fucose isomerase family. In terms of assembly, homohexamer. The cofactor is Mn(2+).

The protein resides in the cytoplasm. It catalyses the reaction L-fucose = L-fuculose. It participates in carbohydrate degradation; L-fucose degradation; L-lactaldehyde and glycerone phosphate from L-fucose: step 1/3. Its function is as follows. Converts the aldose L-fucose into the corresponding ketose L-fuculose. The sequence is that of L-fucose isomerase from Shigella dysenteriae serotype 1 (strain Sd197).